Reading from the N-terminus, the 417-residue chain is UDP-N-acetylglucosamine 1-carboxyvinyltransferase (417 aa).

Position 22–23 (22–23 (KN)) interacts with phosphoenolpyruvate. Arg91 is a binding site for UDP-N-acetyl-alpha-D-glucosamine. The Proton donor role is filled by Cys115. Cys115 carries the post-translational modification 2-(S-cysteinyl)pyruvic acid O-phosphothioketal. UDP-N-acetyl-alpha-D-glucosamine-binding positions include 120 to 124 (RPVDL), Asp304, and Ile326.

Belongs to the EPSP synthase family. MurA subfamily.

The protein localises to the cytoplasm. The enzyme catalyses phosphoenolpyruvate + UDP-N-acetyl-alpha-D-glucosamine = UDP-N-acetyl-3-O-(1-carboxyvinyl)-alpha-D-glucosamine + phosphate. It functions in the pathway cell wall biogenesis; peptidoglycan biosynthesis. In terms of biological role, cell wall formation. Adds enolpyruvyl to UDP-N-acetylglucosamine. The polypeptide is UDP-N-acetylglucosamine 1-carboxyvinyltransferase (Nitratidesulfovibrio vulgaris (strain ATCC 29579 / DSM 644 / CCUG 34227 / NCIMB 8303 / VKM B-1760 / Hildenborough) (Desulfovibrio vulgaris)).